A 566-amino-acid polypeptide reads, in one-letter code: KsdD-like steroid dehydrogenase MT0809 (566 aa).

Residue 23–54 (DAIVVGAGLAGLVAACELADRGLRVLILDQEN) coordinates FAD.

The protein belongs to the FAD-dependent oxidoreductase 2 family. The cofactor is FAD.

Its pathway is lipid metabolism; steroid biosynthesis. Its function is as follows. Able to catalyze the elimination of the C-1 and C-2 hydrogen atoms of the A-ring from the polycyclic ring structure of 3-ketosteroids. The polypeptide is KsdD-like steroid dehydrogenase MT0809 (Mycobacterium tuberculosis (strain CDC 1551 / Oshkosh)).